A 181-amino-acid polypeptide reads, in one-letter code: Sodium/potassium-transporting ATPase subunit beta-1-interacting protein 3 (181 aa).

4 helical membrane-spanning segments follow: residues 5–22 (TGRCTLIFICTLQMLVAL), 35–55 (APILGNFLHIIVVILGLFGTI), 62–82 (IVAYTIWTAFWVAWNVFIICF), and 151–171 (AVQILLSLIGFVYACYVISVI).

It belongs to the NKAIN family. In terms of assembly, interacts with atp1b1 C-terminus.

Its subcellular location is the cell membrane. The sequence is that of Sodium/potassium-transporting ATPase subunit beta-1-interacting protein 3 (nkain3) from Xenopus tropicalis (Western clawed frog).